The following is a 930-amino-acid chain: F-box only protein 11 (930 aa).

Residues 1–150 form a disordered region; it reads MNSVRAANRR…RVSGKSQDLS (150 aa). The segment covering 7–16 has biased composition (basic residues); that stretch reads ANRRPRRVSR. Residues 17 to 27 are compositionally biased toward low complexity; the sequence is PRPVQQQQQQP. Residues 28-73 are compositionally biased toward pro residues; that stretch reads PQQPPPQPPQQQPPPQPPQQPPQQQPPPPPQQQPPPPPPPPPPPPQ. A compositionally biased stretch (polar residues) spans 117-132; sequence PTKSSMEGASTSTTEN. Residues 156–202 form the F-box domain; it reads QYLQEKLPDEVVLKIFSYLLEQDLCRAACVCKRFSELANDPILWKRL. 19 PbH1 repeats span residues 398–420, 421–443, 444–466, 467–489, 490–512, 513–535, 536–558, 559–581, 582–604, 605–627, 628–650, 651–673, 674–696, 697–719, 720–742, 743–765, 766–788, 789–811, and 812–833; these read GACPTIKHCNISDCENVGLYITD, HAQGIYEDNEISNNALAGIWVKN, HGNPIIRRNHIHHGRDVGVFTFD, HGMGYFESCNIHRNRIAGFEVKA, YANPTVVRCEIHHGQTGGIYVHE, KGRGQFIENKIYANNFAGVWITS, NSDPTIRGNSIFNGNQGGVYIFG, DGRGLIEGNDIYGNALAGIQIRT, NSCPIVRHNKIHDGQHGGIYVHE, KGQGVIEENEVYSNTLAGVWVTT, GSTPVLRRNRIHSGKQVGVYFYD, NGHGVLEDNDIYNHMYSGVQIRT, GSNPKIRRNKIWGGQNGGILVYN, SGLGCIEDNEIFDNAMAGVWIKT, DSNPTLRRNKIHDGRDGGICIFN, GGRGLLEENDIFRNAQAGVLIST, NSHPVLRKNRIFDGFAAGIEITN, HATATLEGNQIFNNRFGGLFLAS, and GVNVTMKDNKIMNNQDAIEKAV. The UBR-type zinc-finger motif lies at 836–907; that stretch reads GQCLYKISSY…LSNPCTLAGE (72 aa).

As to quaternary structure, component of the SCF(FBXO11) complex consisting of CUL1, RBX1, SKP1 and FBXO11. Interacts with CIITA. At 9.5 dpc and 10.5 dpc, expression is restricted to developing heart tissue. By 11.5 dpc and 12.5 dpc, detected in liver and subsequently in muscle by 13.5 dpc. At 14.5 dpc, still detected in heart, liver and muscle and also in the developing secondary palate including the nasal, medial and oral epithelia of the palatal shelves. At 15.5 dpc and 16.5 dpc, expressed in lung, kidney, heart, liver, muscle and adrenal gland. At this time, fusion of the palate shelves has occurred, with expression confined to the nasal and oral epithelia. At 17.5 dpc, expression in the lung is confined to bronchial epithelial cells and is evident in bone marrow, skin, tissue macrophages, osteoblasts, kidney, liver and spleen. At 18.5 dpc, expressed in bone marrow, liver, kidney and muscle but decreases in heart and lung. At this time, first detected in the middle ear epithelium. At the newborn stage, expression is strong in the middle ear where it is confined to mucin-secreting cells, as well as persisting in bone marrow, kidney and liver. Middle ear expression persists in postnatal head tissue at 4 and 13 days after birth and has declined by 21 days after birth. In the adult, expression is seen in alveolar macrophages of the lung, glomeruli and collecting tubules of the kidney, midbrain, heart and muscle.

It localises to the nucleus. It is found in the chromosome. It functions in the pathway protein modification; protein ubiquitination. Substrate recognition component of a SCF (SKP1-CUL1-F-box protein) E3 ubiquitin-protein ligase complex which mediates the ubiquitination and subsequent proteasomal degradation of target proteins, such as DTL/CDT2, BCL6, SNAI1 and PRDM1/BLIMP1. The SCF(FBXO11) complex mediates ubiquitination and degradation of BCL6, thereby playing a role in the germinal center B-cells terminal differentiation toward memory B-cells and plasma cells. The SCF(FBXO11) complex also mediates ubiquitination and degradation of DTL, an important step for the regulation of TGF-beta signaling, cell migration and the timing of the cell-cycle progression and exit. The SCF(FBXO11) complex also catalyzes ubiquitination and degradation of GSK3B-phosphorylated SNAI1. Binds to and neddylates phosphorylated p53/TP53, inhibiting its transcriptional activity. Plays a role in the regulatiom of erythropoiesis but not myelopoiesis or megakaryopoiesis. Mechanistically, activates erythroid genes by mediating the degradation of BAHD1, a heterochromatin-associated protein that recruits corepressors to H3K27me3 marks. Participates in macrophage cell death and inflammation in response to bacterial toxins by regulating the expression of complement 5a receptor 1/C5AR1 and IL-1beta. Acts as a critical regulator to determine the level of MHC-II by mediating the recognition of degron at the P/S/T domain of CIITA leading to its ubiquitination and subsequent degradation via the proteasome. Participates in the antiviral repsonse by initiating the activation of TBK1-IRF3-IFN-I axis. Mediates the 'Lys-63'-linked ubiquitination of TRAF3 to strengthen the interaction between TRAF3 and TBK1. The polypeptide is F-box only protein 11 (Mus musculus (Mouse)).